The primary structure comprises 522 residues: MSLTIPSPASGTSTSATTDTAPAAAPQRTYQVRTFGCQMNVHDSERMAGMLEDAGYVPASGENADVVVFNTCAVRENADNKLYGNLGMLAPVKAANPGMQIAVGGCLAQKDRETILKKAPWVDAVFGTHNVGALPALLDRARHNNEAQLEILESLDVFPSTLPTKRDSVYSGWVSISVGCNNTCTFCIVPALRGKEKDRRPGDILAEIQALVDDGAIEVTLLGQNVNSYGVEFGDRQAFSKLLRACGEIQGLERVRFTSPHPAAFTDDVIDAMAETPNVMPQLHMPLQSGSDKVLKDMKRSYRSTKFLGILDKVRERIPHAAISTDIIVGFPGETEEDFQATLDVVEKSRFATAFTFQYSKRPGTPAADLPDQLPKAVVQERFERLTALQDRIAAEENARQLGRRVEVMVTAQSGRKSEETHRLSGRSQDQRLVHFSVPEGAEKPRPGDLVTVTITEAAAFHLVADPASAADYSLRRSRAGDAWDRSQADSCGAPVAGGGAGSNGGKGGVSLGMPALPVRRS.

Over residues methionine 1–proline 26 the composition is skewed to low complexity. The tract at residues methionine 1–glutamine 27 is disordered. Positions arginine 28–histidine 143 constitute an MTTase N-terminal domain. Positions 37, 72, 106, 180, 184, and 187 each coordinate [4Fe-4S] cluster. The Radical SAM core domain maps to arginine 166 to glutamate 396. Residues alanine 399–serine 469 enclose the TRAM domain. A disordered region spans residues glycine 481–serine 522. Positions valine 496–serine 511 are enriched in gly residues.

The protein belongs to the methylthiotransferase family. MiaB subfamily. Monomer. The cofactor is [4Fe-4S] cluster.

The protein localises to the cytoplasm. It carries out the reaction N(6)-dimethylallyladenosine(37) in tRNA + (sulfur carrier)-SH + AH2 + 2 S-adenosyl-L-methionine = 2-methylsulfanyl-N(6)-dimethylallyladenosine(37) in tRNA + (sulfur carrier)-H + 5'-deoxyadenosine + L-methionine + A + S-adenosyl-L-homocysteine + 2 H(+). Catalyzes the methylthiolation of N6-(dimethylallyl)adenosine (i(6)A), leading to the formation of 2-methylthio-N6-(dimethylallyl)adenosine (ms(2)i(6)A) at position 37 in tRNAs that read codons beginning with uridine. The protein is tRNA-2-methylthio-N(6)-dimethylallyladenosine synthase of Arthrobacter sp. (strain FB24).